The primary structure comprises 340 residues: DNA-directed RNA polymerase subunit alpha (340 aa).

The alpha N-terminal domain (alpha-NTD) stretch occupies residues 1–236 (MLSLSKNWNT…EQLQLFISFE (236 aa)). Residues 251–340 (FSPYLLKRVD…LSKRYEDSYN (90 aa)) are alpha C-terminal domain (alpha-CTD).

This sequence belongs to the RNA polymerase alpha chain family. In terms of assembly, homodimer. The RNAP catalytic core consists of 2 alpha, 1 beta, 1 beta' and 1 omega subunit. When a sigma factor is associated with the core the holoenzyme is formed, which can initiate transcription.

It catalyses the reaction RNA(n) + a ribonucleoside 5'-triphosphate = RNA(n+1) + diphosphate. In terms of biological role, DNA-dependent RNA polymerase catalyzes the transcription of DNA into RNA using the four ribonucleoside triphosphates as substrates. The polypeptide is DNA-directed RNA polymerase subunit alpha (Rickettsia akari (strain Hartford)).